Reading from the N-terminus, the 383-residue chain is MRLLSFKKSKIVSIGTELEFQIIDCSSLSLVSRSKELMRALKDMRYRDQIKPEITQSMIEINSSIHQSAKEMYDELLELQKILVETAASIDIAFCGGGTHPFQQWTMQKIFPSKRFKKKFNQYRYLSKRATVFGQHIHIGCPTGDDAIYLTHALARYVPHFIAISASSPFYLGINTNYCSSRSTIFNAFPLSGVIPYLRNWQEFSDYYRKMYRWKIIENMKDFYWDIRPKPELGTIEIRVCDTPLTLRKSILITAYIQALALYLLEEKSVQLSHDLYYVYNYNRFQASRHGLEGELTVTDKDRPIPIMDDILETIKKIEQYINGLGNSEYIEELYSDVINKQNDSVLINKIYKQDGSFSKLVAAQCELWLSDSKDRKWMTQPS.

The protein belongs to the glutamate--cysteine ligase type 2 family. YbdK subfamily.

The enzyme catalyses L-cysteine + L-glutamate + ATP = gamma-L-glutamyl-L-cysteine + ADP + phosphate + H(+). In terms of biological role, ATP-dependent carboxylate-amine ligase which exhibits weak glutamate--cysteine ligase activity. The protein is Putative glutamate--cysteine ligase 2 of Legionella pneumophila subsp. pneumophila (strain Philadelphia 1 / ATCC 33152 / DSM 7513).